The chain runs to 403 residues: Serine/threonine transporter SstT (403 aa).

9 consecutive transmembrane segments (helical) span residues 16–36 (QIVI…AIAL), 45–65 (FVSA…MASI), 79–99 (ILWL…VASM), 138–158 (ALLN…GVAL), 175–195 (GVTL…FGLV), 214–234 (LAVL…LIVF), 295–315 (MAGA…TLGI), 327–347 (MVAA…LLLI), and 353–373 (LFGI…IIGV).

It belongs to the dicarboxylate/amino acid:cation symporter (DAACS) (TC 2.A.23) family.

It localises to the cell inner membrane. The catalysed reaction is L-serine(in) + Na(+)(in) = L-serine(out) + Na(+)(out). It carries out the reaction L-threonine(in) + Na(+)(in) = L-threonine(out) + Na(+)(out). Its function is as follows. Involved in the import of serine and threonine into the cell, with the concomitant import of sodium (symport system). The protein is Serine/threonine transporter SstT of Pseudomonas putida (strain W619).